A 501-amino-acid polypeptide reads, in one-letter code: Glycerol kinase (501 aa).

Threonine 17 is a binding site for ADP. ATP is bound by residues threonine 17, threonine 18, and serine 19. Threonine 17 is a sn-glycerol 3-phosphate binding site. Arginine 21 lines the ADP pocket. Sn-glycerol 3-phosphate is bound by residues arginine 87, glutamate 88, tyrosine 139, and aspartate 243. Glycerol contacts are provided by arginine 87, glutamate 88, tyrosine 139, aspartate 243, and glutamine 244. The ADP site is built by threonine 265 and glycine 308. 4 residues coordinate ATP: threonine 265, glycine 308, glutamine 312, and glycine 409. 2 residues coordinate ADP: glycine 409 and asparagine 413.

The protein belongs to the FGGY kinase family.

It catalyses the reaction glycerol + ATP = sn-glycerol 3-phosphate + ADP + H(+). The protein operates within polyol metabolism; glycerol degradation via glycerol kinase pathway; sn-glycerol 3-phosphate from glycerol: step 1/1. Inhibited by fructose 1,6-bisphosphate (FBP). Key enzyme in the regulation of glycerol uptake and metabolism. Catalyzes the phosphorylation of glycerol to yield sn-glycerol 3-phosphate. The sequence is that of Glycerol kinase from Pseudomonas savastanoi pv. phaseolicola (strain 1448A / Race 6) (Pseudomonas syringae pv. phaseolicola (strain 1448A / Race 6)).